Reading from the N-terminus, the 150-residue chain is MKVSRHAKILEIINSKDIDTQEELAEELKKMGMNVTQATVSRDIKELKLIKVLGNTGKYKYATINHTESYMSDKLINIFAQTVINVENIDKLIIIKAISGSAPAAAEAIDTLGFDGVAGTIAGDNTIFVMARTNEKAQEITMKLKKIINA.

The protein belongs to the ArgR family.

It is found in the cytoplasm. It participates in amino-acid biosynthesis; L-arginine biosynthesis [regulation]. Functionally, regulates arginine biosynthesis genes. This chain is Arginine repressor, found in Clostridium botulinum (strain Loch Maree / Type A3).